The primary structure comprises 423 residues: MDIDQYMTDLGRRARHASRAMARASTAAKNAALDAVARAIERDAQALKDANARDVARAREKGLDAAFVDRLTLSDKALKTMVEGLRQVASLADPIGEIGNLKFRPSGIQVGQMRVPLGVIGIIYESRPNVTIDAAALCLKSGNATILRGGSEALESNAALAKLIGEGLEAAGLPQDAVQVVATADRAAVGKLITMTEYVDVIVPRGGKSLIERLINEARVPMIKHLDGICHVYVDDRADLAKALTVCDNAKTHRYGTCNTMETLLVASGIAAKLLPRLGKLYRDKQVELRVDAAARAVLADAGVGPLVDATEEDWHTEYLAPVLAIKVVDGLDAAIEHINHYGSHHTDAIVTEDHDRAMRFLREVDSASVMVNASTRFADGFEFGLGAEIGISNDKLHARGPVGLEGLTSLKYVVLGHGEGRQ.

This sequence belongs to the gamma-glutamyl phosphate reductase family.

Its subcellular location is the cytoplasm. It carries out the reaction L-glutamate 5-semialdehyde + phosphate + NADP(+) = L-glutamyl 5-phosphate + NADPH + H(+). The protein operates within amino-acid biosynthesis; L-proline biosynthesis; L-glutamate 5-semialdehyde from L-glutamate: step 2/2. Functionally, catalyzes the NADPH-dependent reduction of L-glutamate 5-phosphate into L-glutamate 5-semialdehyde and phosphate. The product spontaneously undergoes cyclization to form 1-pyrroline-5-carboxylate. The sequence is that of Gamma-glutamyl phosphate reductase from Burkholderia orbicola (strain MC0-3).